Consider the following 143-residue polypeptide: Large ribosomal subunit protein uL11 (143 aa).

It belongs to the universal ribosomal protein uL11 family. In terms of assembly, part of the ribosomal stalk of the 50S ribosomal subunit. Interacts with L10 and the large rRNA to form the base of the stalk. L10 forms an elongated spine to which L12 dimers bind in a sequential fashion forming a multimeric L10(L12)X complex. Post-translationally, one or more lysine residues are methylated.

In terms of biological role, forms part of the ribosomal stalk which helps the ribosome interact with GTP-bound translation factors. The polypeptide is Large ribosomal subunit protein uL11 (Rhizorhabdus wittichii (strain DSM 6014 / CCUG 31198 / JCM 15750 / NBRC 105917 / EY 4224 / RW1) (Sphingomonas wittichii)).